We begin with the raw amino-acid sequence, 149 residues long: Alpha-amylase/trypsin inhibitor CMb (149 aa).

The first 24 residues, 1 to 24 (MASKSSCDLLLAAVLVSIFAAVAA), serve as a signal peptide directing secretion. The N-linked (GlcNAc...) asparagine glycan is linked to Asn124.

The protein belongs to the protease inhibitor I6 (cereal trypsin/alpha-amylase inhibitor) family. In terms of assembly, heterotetramer of one CMa, one CMb and two CMd chains. Five disulfide bonds, which are essential for the inhibitor activity, are probably present. Post-translationally, exists both in a glycosylated and in an unglycosylated form. The glycosylated form is a potent allergen. In terms of tissue distribution, endosperm.

The protein localises to the secreted. Its function is as follows. Part of a complex with inhibitory activity, but CMb is inactive as a separate subunit. The sequence is that of Alpha-amylase/trypsin inhibitor CMb (IAT2) from Hordeum vulgare (Barley).